A 326-amino-acid polypeptide reads, in one-letter code: Malate dehydrogenase (326 aa).

11–17 (GAAGQIG) is a binding site for NAD(+). The substrate site is built by arginine 92 and arginine 98. Residues asparagine 105, glutamine 112, and 129–131 (VGN) contribute to the NAD(+) site. Substrate contacts are provided by asparagine 131 and arginine 162. The Proton acceptor role is filled by histidine 187.

This sequence belongs to the LDH/MDH superfamily. MDH type 2 family.

It carries out the reaction (S)-malate + NAD(+) = oxaloacetate + NADH + H(+). Functionally, catalyzes the reversible oxidation of malate to oxaloacetate. The polypeptide is Malate dehydrogenase (Chromobacterium violaceum (strain ATCC 12472 / DSM 30191 / JCM 1249 / CCUG 213 / NBRC 12614 / NCIMB 9131 / NCTC 9757 / MK)).